A 701-amino-acid chain; its full sequence is Potassium-transporting ATPase ATP-binding subunit 1 (701 aa).

The segment at 1–26 is disordered; that stretch reads MNPVAPTRKVKPPRNRPSDRRQARKK. 4 helical membrane-spanning segments follow: residues 57-77, 90-110, 241-261, and 278-298; these read MFVVWVATLVTLAVTINPDLF, GLLTGILFFTVWFANFAEAVA, VALTVLLAVLSLVFLFVIATL, and IALLVALIPTTIGGLLSAIGI. Aspartate 329 (4-aspartylphosphate intermediate) is an active-site residue. Residues aspartate 366, glutamate 370, 397 to 404, and lysine 416 each bind ATP; that span reads FSAKTRMS. Residues aspartate 539 and aspartate 543 each coordinate Mg(2+). Transmembrane regions (helical) follow at residues 599-619, 635-655, and 681-701; these read FSIANDIAKYFAIIPVIFAAA, AVLSALIYNALIIPALIPLAL, and VIAPFIAIKLIDILITLVGLA.

This sequence belongs to the cation transport ATPase (P-type) (TC 3.A.3) family. Type IA subfamily. The system is composed of three essential subunits: KdpA, KdpB and KdpC.

It is found in the cell inner membrane. The enzyme catalyses K(+)(out) + ATP + H2O = K(+)(in) + ADP + phosphate + H(+). Functionally, part of the high-affinity ATP-driven potassium transport (or Kdp) system, which catalyzes the hydrolysis of ATP coupled with the electrogenic transport of potassium into the cytoplasm. This subunit is responsible for energy coupling to the transport system and for the release of the potassium ions to the cytoplasm. This chain is Potassium-transporting ATPase ATP-binding subunit 1, found in Nostoc sp. (strain PCC 7120 / SAG 25.82 / UTEX 2576).